The following is a 549-amino-acid chain: Urocanate hydratase (549 aa).

Residues 46 to 47 (GG), glutamine 124, 170 to 172 (GMG), glutamate 190, arginine 195, 236 to 237 (NA), 257 to 261 (QTSAH), 267 to 268 (YV), and tyrosine 316 contribute to the NAD(+) site. Residue cysteine 404 is part of the active site. NAD(+) is bound at residue glycine 486.

Belongs to the urocanase family. Requires NAD(+) as cofactor.

The protein resides in the cytoplasm. It carries out the reaction 4-imidazolone-5-propanoate = trans-urocanate + H2O. It functions in the pathway amino-acid degradation; L-histidine degradation into L-glutamate; N-formimidoyl-L-glutamate from L-histidine: step 2/3. In terms of biological role, catalyzes the conversion of urocanate to 4-imidazolone-5-propionate. This is Urocanate hydratase from Caldanaerobacter subterraneus subsp. tengcongensis (strain DSM 15242 / JCM 11007 / NBRC 100824 / MB4) (Thermoanaerobacter tengcongensis).